Here is a 149-residue protein sequence, read N- to C-terminus: MSTPIAIDINKILKLLPHRYPFLLVDRVLEISPRESITALKNVTMNEPFFQGHFPGFPMMPGVLIIEALAQTAALLTFSDERAEDAIYYFAGIDGARFKKPVLPGDQLIMTAKLERDRAGIYKFAVQATADGEIAAEANITCAVRTKGA.

H53 is an active-site residue.

Belongs to the thioester dehydratase family. FabZ subfamily.

The protein localises to the cytoplasm. It catalyses the reaction a (3R)-hydroxyacyl-[ACP] = a (2E)-enoyl-[ACP] + H2O. In terms of biological role, involved in unsaturated fatty acids biosynthesis. Catalyzes the dehydration of short chain beta-hydroxyacyl-ACPs and long chain saturated and unsaturated beta-hydroxyacyl-ACPs. The sequence is that of 3-hydroxyacyl-[acyl-carrier-protein] dehydratase FabZ from Polynucleobacter necessarius subsp. necessarius (strain STIR1).